The following is a 1575-amino-acid chain: Ras GTPase-activating-like protein IQGAP2 (1575 aa).

Position 16 is a phosphoserine (Ser16). A Calponin-homology (CH) domain is found at 41-156 (LCHLEEAKRW…YCIHALSLYL (116 aa)). Residue Thr356 is modified to Phosphothreonine. A WW domain is found at 594 to 627 (VSSDGSWLKLNLHKKYDYYYNTDSKESSWVTPES). Ser595, Ser599, and Ser685 each carry phosphoserine. IQ domains are found at residues 690–719 (QEEN…TFID), 720–749 (NTDS…YFRD), and 750–779 (HNNE…SENP). A Phosphothreonine modification is found at Thr716. 4 positions are modified to phosphothreonine: Thr782, Thr881, Thr1002, and Thr1269. One can recognise a Ras-GAP domain in the interval 933–1182 (YLLLKLFKTA…QEFRKYFKEA (250 aa)). Ser1271, Ser1279, Ser1358, and Ser1461 each carry phosphoserine.

Isoform 2 expression is enhanced in testis.

Its function is as follows. Binds to activated CDC42 and RAC1 but does not seem to stimulate their GTPase activity. Associates with calmodulin. This is Ras GTPase-activating-like protein IQGAP2 (IQGAP2) from Homo sapiens (Human).